A 198-amino-acid polypeptide reads, in one-letter code: Small ribosomal subunit protein uS7 (198 aa).

This sequence belongs to the universal ribosomal protein uS7 family. Part of the 30S ribosomal subunit.

One of the primary rRNA binding proteins, it binds directly to 16S rRNA where it nucleates assembly of the head domain of the 30S subunit. Is located at the subunit interface close to the decoding center. The polypeptide is Small ribosomal subunit protein uS7 (Desulfurococcus amylolyticus (strain DSM 18924 / JCM 16383 / VKM B-2413 / 1221n) (Desulfurococcus kamchatkensis)).